Consider the following 304-residue polypeptide: Protein Largen (304 aa).

Residues 1-13 are compositionally biased toward polar residues; that stretch reads MSAKSKGNPSSSC. Disordered stretches follow at residues 1 to 27, 66 to 91, 114 to 160, and 239 to 304; these read MSAK…TKVK, QLED…TASS, LTVL…GGLP, and HPPG…TTTV. Residues 33-70 are a coiled coil; it reads IVEDLELVLGDLKDVAKELKEVVDQIDTLTSDLQLEDE. Low complexity predominate over residues 77-91; the sequence is TDTLNSSSSGTTASS. 3 stretches are compositionally biased toward pro residues: residues 120 to 129, 239 to 261, and 277 to 289; these read PNPPPPPPRL, HPPG…PPFP, and PIRP…PTAP.

In terms of biological role, regulator of cell size that promotes cell size increase independently of mTOR and Hippo signaling pathways. Acts by stimulating the translation of specific mRNAs, including those encoding proteins affecting mitochondrial functions. Increases mitochondrial mass and respiration. The protein is Protein Largen (PRR16) of Homo sapiens (Human).